The primary structure comprises 111 residues: MNWRVVDSVVSTDTNSVFTLISSQQSFKLILWYKATFYLSSGDTLSINGASITVNNHPVELTLYRTTVYNARFWQTIVNSNTHCAGNHRQSVGRCGYRRKCKLLYCPFQKH.

It belongs to the IraM/RssC family.

The protein localises to the cytoplasm. Functionally, involved in the stabilization of the sigma stress factor RpoS. This is Anti-adapter protein IraM from Cronobacter sakazakii (strain ATCC BAA-894) (Enterobacter sakazakii).